A 130-amino-acid polypeptide reads, in one-letter code: Small ribosomal subunit protein uS8 (130 aa).

Belongs to the universal ribosomal protein uS8 family. In terms of assembly, part of the 30S ribosomal subunit. Contacts proteins S5 and S12.

One of the primary rRNA binding proteins, it binds directly to 16S rRNA central domain where it helps coordinate assembly of the platform of the 30S subunit. The sequence is that of Small ribosomal subunit protein uS8 from Vibrio parahaemolyticus serotype O3:K6 (strain RIMD 2210633).